The sequence spans 640 residues: GATA zinc finger domain-containing protein 12 (640 aa).

Disordered stretches follow at residues 121–209 (SNNI…NIPI) and 355–390 (QQIRLQQQQSQQQHQQHQQHQQHQQPPTNIPQHINN). Composition is skewed to low complexity over residues 122 to 209 (NNIP…NIPI) and 355 to 379 (QQIRLQQQQSQQQHQQHQQHQQHQQ). Positions 380 to 390 (PPTNIPQHINN) are enriched in polar residues. The GATA-type zinc-finger motif lies at 506-531 (CVNCKTSDTPEWRRGPQGAKTLCNAC).

The protein is GATA zinc finger domain-containing protein 12 (gtaL) of Dictyostelium discoideum (Social amoeba).